We begin with the raw amino-acid sequence, 297 residues long: uncharacterized protein (297 aa).

Positions 46-229 (LGAGGPPPPP…RPPPYIAPPP (184 aa)) are disordered. Residues 65–81 (PEGPGGPPQHAPPNPPP) show a composition bias toward pro residues. The span at 90–100 (RGGGAGGAGDG) shows a compositional bias: gly residues. Positions 106-117 (DAAEEYGPEDLD) are enriched in acidic residues. Basic residues predominate over residues 137–151 (HQTRGPGRRAKKRLR). The segment covering 184–201 (ATPQAAPAAKTTPASPQT) has biased composition (low complexity). The segment covering 219–229 (HRPPPYIAPPP) has biased composition (pro residues).

This is an uncharacterized protein from Torque teno virus (isolate Human/China/CT23F/2001) (TTV).